The primary structure comprises 105 residues: Thiosulfate sulfurtransferase GlpE (105 aa).

The region spanning 15–103 (MQQGAILVDI…WCRAELPIDT (89 aa)) is the Rhodanese domain. Residue cysteine 63 is the Cysteine persulfide intermediate of the active site.

The protein belongs to the GlpE family.

It localises to the cytoplasm. It catalyses the reaction thiosulfate + hydrogen cyanide = thiocyanate + sulfite + 2 H(+). It carries out the reaction thiosulfate + [thioredoxin]-dithiol = [thioredoxin]-disulfide + hydrogen sulfide + sulfite + 2 H(+). In terms of biological role, transferase that catalyzes the transfer of sulfur from thiosulfate to thiophilic acceptors such as cyanide or dithiols. May function in a CysM-independent thiosulfate assimilation pathway by catalyzing the conversion of thiosulfate to sulfite, which can then be used for L-cysteine biosynthesis. The protein is Thiosulfate sulfurtransferase GlpE of Haemophilus influenzae (strain 86-028NP).